The sequence spans 457 residues: Solute carrier family 38 member 6 (457 aa).

At Met1 the chain carries N-acetylmethionine. Phosphoserine is present on residues Ser4 and Ser7. The next 5 helical transmembrane spans lie at 48–68 (FGLS…LGLA), 70–90 (VMAN…ALLA), 112–132 (LGLF…IIIQ), 171–191 (LLII…KIGF), and 192–212 (LGYT…VVVI). Cysteines 219 and 239 form a disulfide. The N-linked (GlcNAc...) asparagine glycan is linked to Asn234. A helical transmembrane segment spans residues 251–271 (VYAIPTMAFSFLCHTSVLPIY). Asn284 carries N-linked (GlcNAc...) asparagine glycosylation. The next 5 helical transmembrane spans lie at 289–309 (AIAL…LTFY), 328–348 (AAVM…VPLI), 372–392 (SLTT…VPDI), 395–415 (VFGV…PGLF), and 432–452 (ALSL…LIIL).

It belongs to the amino acid/polyamine transporter 2 family.

Its subcellular location is the cell membrane. The protein resides in the synapse. It carries out the reaction L-glutamine(out) = L-glutamine(in). The enzyme catalyses L-glutamate(out) = L-glutamate(in). Amino acid transporter with an apparent selectivity for L-glutamine and L-glutamate. May facilitate glutamine uptake in excitatory neurons. The transport mechanism remains to be elucidated. The sequence is that of Solute carrier family 38 member 6 from Rattus norvegicus (Rat).